We begin with the raw amino-acid sequence, 317 residues long: N-acetylmuramoyl-L-alanine amidase XlyB (317 aa).

The signal sequence occupies residues 1–39 (MSIPVKKNLVSEAKYALKCPNAMSAEYITIHNTANDASA). One can recognise an N-acetylmuramoyl-L-alanine amidase domain in the interval 40 to 142 (ANEISYMIGN…QDWSGKYCPH (103 aa)). The region spanning 177 to 221 (SEYHVKKGDTLSGIAASHGASVKTLQSINHITDPNHIKIGQVIKL) is the LysM domain.

This sequence belongs to the N-acetylmuramoyl-L-alanine amidase 2 family.

It localises to the secreted. The enzyme catalyses Hydrolyzes the link between N-acetylmuramoyl residues and L-amino acid residues in certain cell-wall glycopeptides.. Functionally, autolysins are involved in some important biological processes such as cell separation, cell-wall turnover, competence for genetic transformation, formation of the flagella and sporulation. The chain is N-acetylmuramoyl-L-alanine amidase XlyB (xlyB) from Bacillus subtilis (strain 168).